Here is a 416-residue protein sequence, read N- to C-terminus: Phosphatidylinositol 5-phosphate 4-kinase type-2 beta (416 aa).

S2 is subject to N-acetylserine. Position 8 is a phosphothreonine (T8). S19 is subject to Phosphoserine. Residues 38-415 enclose the PIPK domain; sequence ASEPILSVLM…RFNEFMSNIL (378 aa). The interval 64–70 is required for interaction with PIP5K1A; that stretch reads VMLMPDD. Residues K94 and K150 each carry the N6-acetyllysine modification. Residues 202 to 204 and K214 each bind ATP; that span reads RNV. Residues 203-204 and K214 contribute to the GTP site; that span reads NV. The residue at position 322 (T322) is a Phosphothreonine. Residue S326 is modified to Phosphoserine. D369 is a binding site for GTP.

As to quaternary structure, homodimer. Binds TNFRSF1A. Interacts with PIP4K2A; the interaction suppresses ubiquitination by the SPOP/CUL3 complex. Probably interacts with PIP5K1A; the interaction inhibits PIP5K1A kinase activity. In terms of processing, ubiquitinated by the SPOP/CUL3 complex. Ubiquitination is stimulated by PtdIns5P levels. Post-translationally, phosphorylated on serine residues.

It localises to the endoplasmic reticulum membrane. It is found in the cell membrane. Its subcellular location is the nucleus. The protein resides in the cytoplasm. It catalyses the reaction a 1,2-diacyl-sn-glycero-3-phospho-(1D-myo-inositol-5-phosphate) + ATP = a 1,2-diacyl-sn-glycero-3-phospho-(1D-myo-inositol-4,5-bisphosphate) + ADP + H(+). The enzyme catalyses 1,2-dihexadecanoyl-sn-glycero-3-phospho-(1D-myo-inositol-5-phosphate) + ATP = 1,2-dihexadecanoyl-sn-glycero-3-phospho-(1D-myo-inositol-4,5-bisphosphate) + ADP + H(+). It carries out the reaction 1,2-dihexadecanoyl-sn-glycero-3-phospho-(1D-myo-inositol-5-phosphate) + GTP = 1,2-dihexadecanoyl-sn-glycero-3-phospho-(1D-myo-inositol-4,5-bisphosphate) + GDP + H(+). Participates in the biosynthesis of phosphatidylinositol 4,5-bisphosphate. Preferentially utilizes GTP, rather than ATP, for PI(5)P phosphorylation and its activity reflects changes in direct proportion to the physiological GTP concentration. Its GTP-sensing activity is critical for metabolic adaptation. In collaboration with PIP4K2A, has a role in mediating autophagy in times of nutrient stress. Required for autophagosome-lysosome fusion and the regulation of cellular lipid metabolism. PIP4Ks negatively regulate insulin signaling through a catalytic-independent mechanism. They interact with PIP5Ks and suppress PIP5K-mediated PtdIns(4,5)P2 synthesis and insulin-dependent conversion to PtdIns(3,4,5)P3. This chain is Phosphatidylinositol 5-phosphate 4-kinase type-2 beta, found in Mus musculus (Mouse).